The chain runs to 804 residues: Zinc finger protein YGR067C (804 aa).

2 consecutive C2H2-type zinc fingers follow at residues 8–30 (YICS…ERSH) and 36–59 (FQCQ…RTVH). Residues 782 to 796 (QEFSASSTDNKQSKN) are compositionally biased toward polar residues. Residues 782–804 (QEFSASSTDNKQSKNIEIFSQIK) form a disordered region.

It localises to the nucleus. The protein is Zinc finger protein YGR067C of Saccharomyces cerevisiae (strain ATCC 204508 / S288c) (Baker's yeast).